The following is a 92-amino-acid chain: Large ribosomal subunit protein bL27 (92 aa).

The tract at residues 1 to 20 (MAHKKAGGSTRNGRDSNPKY) is disordered.

Belongs to the bacterial ribosomal protein bL27 family.

The protein is Large ribosomal subunit protein bL27 of Legionella pneumophila (strain Paris).